The primary structure comprises 373 residues: NAD-dependent protein deacylase SRT2 (373 aa).

The transit peptide at 1–47 (MNMRRVFGGVSTDLFPSRSMYRPLQSGGNLVMLFKGCRRFVRTTCRV) directs the protein to the mitochondrion. The region spanning 75–373 (DPPNMEDIHK…DVGSLSVPAL (299 aa)) is the Deacetylase sirtuin-type domain. NAD(+) is bound by residues 100–120 (GAGV…GAYS) and 179–182 (QNVD). Residue His196 is the Proton acceptor of the active site. Zn(2+) contacts are provided by Cys204, Cys207, Cys271, and Cys274. NAD(+) is bound by residues 311-313 (GSS), 337-339 (NIG), and Val355.

It belongs to the sirtuin family. Class II subfamily. In terms of assembly, binds to the promoter region of genes influenced by ethylene. Interacts with ENAP1; this interaction is enhanced in the presence of ethylene. The cofactor is Zn(2+).

It localises to the mitochondrion matrix. The protein resides in the nucleus. It carries out the reaction N(6)-acetyl-L-lysyl-[protein] + NAD(+) + H2O = 2''-O-acetyl-ADP-D-ribose + nicotinamide + L-lysyl-[protein]. Functionally, NAD-dependent protein deacylase. Catalyzes the NAD-dependent hydrolysis of acyl groups from lysine residues. Involved in responses to ethylene leading to the transcriptional repression of some ethylene-responsive genes via the regulation of histone acetylation H3K9Ac. Negatively regulates plant basal defense against plant pathogens, possibly by suppressing salicylic acid biosynthesis. The sequence is that of NAD-dependent protein deacylase SRT2 from Arabidopsis thaliana (Mouse-ear cress).